Consider the following 229-residue polypeptide: MILTDPEWQAVLLSLKVSSLAVLFSLPFGIFFAWLLVRCTFPGKALLDSVLHLPLVLPPVVVGYLLLVSMGRRGFIGERLYDWFGITFAFSWRGAVLAAAVMSFPLMVRAIRLALEGVDVKLEQAARTLGAGRWRVFFTITLPLTLPGIIVGTVLAFARSLGEFGATITFVSNIPGETRTIPSAMYTLIQTPGGESGAARLCIISIALAMISLLISEWLARISRERAGR.

Topologically, residues 1–16 are periplasmic; that stretch reads MILTDPEWQAVLLSLK. Residues 11–219 enclose the ABC transmembrane type-1 domain; it reads VLLSLKVSSL…MISLLISEWL (209 aa). The helical transmembrane segment at 17–37 threads the bilayer; sequence VSSLAVLFSLPFGIFFAWLLV. At 38–49 the chain is on the cytoplasmic side; it reads RCTFPGKALLDS. Residues 50–70 traverse the membrane as a helical segment; it reads VLHLPLVLPPVVVGYLLLVSM. Over 71-83 the chain is Periplasmic; it reads GRRGFIGERLYDW. A helical membrane pass occupies residues 84-104; it reads FGITFAFSWRGAVLAAAVMSF. Residues 105–136 are Cytoplasmic-facing; sequence PLMVRAIRLALEGVDVKLEQAARTLGAGRWRV. A helical transmembrane segment spans residues 137 to 157; it reads FFTITLPLTLPGIIVGTVLAF. Residues 158-201 are Periplasmic-facing; that stretch reads ARSLGEFGATITFVSNIPGETRTIPSAMYTLIQTPGGESGAARL. A helical membrane pass occupies residues 202–222; it reads CIISIALAMISLLISEWLARI. Over 223 to 229 the chain is Cytoplasmic; sequence SRERAGR.

The protein belongs to the binding-protein-dependent transport system permease family. CysTW subfamily.

The protein resides in the cell inner membrane. Its function is as follows. Part of the binding-protein-dependent transport system for molybdenum; probably responsible for the translocation of the substrate across the membrane. The polypeptide is Molybdenum transport system permease protein ModB (modB) (Escherichia coli O157:H7).